Reading from the N-terminus, the 640-residue chain is Threonine--tRNA ligase (640 aa).

The 61-residue stretch at 1 to 61 (MPTITLPDGS…ENDASLQIIT (61 aa)) folds into the TGS domain. The tract at residues 242 to 533 (DHRKIGKRLG…LIEHYEGAFP (292 aa)) is catalytic. Zn(2+)-binding residues include C333, H384, and H510.

It belongs to the class-II aminoacyl-tRNA synthetase family. Homodimer. Zn(2+) serves as cofactor.

It localises to the cytoplasm. The enzyme catalyses tRNA(Thr) + L-threonine + ATP = L-threonyl-tRNA(Thr) + AMP + diphosphate + H(+). Its function is as follows. Catalyzes the attachment of threonine to tRNA(Thr) in a two-step reaction: L-threonine is first activated by ATP to form Thr-AMP and then transferred to the acceptor end of tRNA(Thr). Also edits incorrectly charged L-seryl-tRNA(Thr). The chain is Threonine--tRNA ligase from Pseudomonas syringae pv. syringae (strain B728a).